Consider the following 595-residue polypeptide: NAD-dependent protein deacetylase hst4 (595 aa).

Residues 1–106 (MAPRKTKPAT…HLDLTPRLGF (106 aa)) are disordered. Low complexity predominate over residues 9–32 (ATKPAAKPTPASTATTSSCPSPKS). The Deacetylase sirtuin-type domain maps to 109-428 (YGDQEPQLNL…SADVERVKNE (320 aa)). NAD(+) contacts are provided by residues 134-153 (GAGISTSAGIPDFRSDDGLF) and 222-225 (QNID). His-253 functions as the Proton acceptor in the catalytic mechanism. The Zn(2+) site is built by Cys-261, Cys-264, Cys-283, and Cys-286. NAD(+)-binding positions include 342–344 (GTS), 373–375 (NNE), and Cys-394. Residues 445–473 (QAQTGMLTPSSSYDGDVENASTTTLSNPA) are compositionally biased toward polar residues. The segment at 445 to 595 (QAQTGMLTPS…IPKGMGKLLD (151 aa)) is disordered. Basic and acidic residues-rich tracts occupy residues 478–492 (KLTEILKASKKDAPK) and 530–543 (TPEEKSVKLEEHKA).

The protein belongs to the sirtuin family. Class I subfamily. Zn(2+) is required as a cofactor.

The protein resides in the nucleus. It carries out the reaction N(6)-acetyl-L-lysyl-[protein] + NAD(+) + H2O = 2''-O-acetyl-ADP-D-ribose + nicotinamide + L-lysyl-[protein]. NAD-dependent histone deacetylase, which could function in telomeric silencing, cell cycle progression and chromosome stability. This is NAD-dependent protein deacetylase hst4 from Emericella nidulans (strain FGSC A4 / ATCC 38163 / CBS 112.46 / NRRL 194 / M139) (Aspergillus nidulans).